Consider the following 71-residue polypeptide: Metallothionein-like protein 1 (71 aa).

This sequence belongs to the metallothionein superfamily. Type 15 family.

In terms of biological role, metallothioneins have a high content of cysteine residues that bind various heavy metals. In Casuarina glauca (Swamp oak), this protein is Metallothionein-like protein 1 (MT1).